The chain runs to 93 residues: UPF0298 protein lwe2074 (93 aa).

Belongs to the UPF0298 family.

Its subcellular location is the cytoplasm. This is UPF0298 protein lwe2074 from Listeria welshimeri serovar 6b (strain ATCC 35897 / DSM 20650 / CCUG 15529 / CIP 8149 / NCTC 11857 / SLCC 5334 / V8).